The primary structure comprises 380 residues: Cytochrome b (380 aa).

4 helical membrane passes run F33–M53, W77–V98, W113–L133, and F178–L198. Heme b-binding residues include H83 and H97. Residues H182 and H196 each contribute to the heme b site. H201 lines the a ubiquinone pocket. The next 4 helical transmembrane spans lie at Y226 to S246, L288 to H308, F320 to G340, and F347 to P367.

It belongs to the cytochrome b family. The cytochrome bc1 complex contains 3 respiratory subunits (MT-CYB, CYC1 and UQCRFS1), 2 core proteins (UQCRC1 and UQCRC2) and probably 6 low-molecular weight proteins. Heme b is required as a cofactor.

It localises to the mitochondrion inner membrane. Functionally, component of the ubiquinol-cytochrome c reductase complex (complex III or cytochrome b-c1 complex) that is part of the mitochondrial respiratory chain. The b-c1 complex mediates electron transfer from ubiquinol to cytochrome c. Contributes to the generation of a proton gradient across the mitochondrial membrane that is then used for ATP synthesis. In Arapaima gigas (Arapaima), this protein is Cytochrome b (mt-cyb).